Here is a 158-residue protein sequence, read N- to C-terminus: uncharacterized protein (158 aa).

Residues 77–132 are disordered; the sequence is AIKRNKIGGSKRSEVHSNRSKNYSSKKFRSQKCRRSRQKKRQNKKPNNSRFISSNK. Residues 100 to 120 show a composition bias toward basic residues; sequence SSKKFRSQKCRRSRQKKRQNK.

This is an uncharacterized protein from Acanthamoeba polyphaga mimivirus (APMV).